The following is a 119-amino-acid chain: Large ribosomal subunit protein uL18 (119 aa).

Belongs to the universal ribosomal protein uL18 family. As to quaternary structure, part of the 50S ribosomal subunit; part of the 5S rRNA/L5/L18/L25 subcomplex. Contacts the 5S and 23S rRNAs.

Its function is as follows. This is one of the proteins that bind and probably mediate the attachment of the 5S RNA into the large ribosomal subunit, where it forms part of the central protuberance. The polypeptide is Large ribosomal subunit protein uL18 (Clostridium botulinum (strain 657 / Type Ba4)).